We begin with the raw amino-acid sequence, 1333 residues long: MSTSTATTSVITSNELSLSGHAHGHGHAHQLHQHTHSRLGVGVGVGILSDASLSPIQQGSGGHSGGGNTNSSPLAPNGVPLLTTMHRSPDSPQPELATMTNVNVLDLHTDNSKLYDKEAVFIYETPKVVMPADGGGGNNSDEGHAIDARIAAQMGNQAQQQQQQQQQTEHQPLAKIEFDENQIIRVVGPNGEQQQIISREIINGEHHILSRNEAGEHILTRIVSDPSKLMPNDNAVATAMYNQAQKMNNDHGQAVYQTSPLPLDASVLHYSGGNDSNVIKTEADIYEDHKKHAAAAAAAAGGGSIIYTTSDPNGVNVKQLPHLTVPQKLDPDLYQADKHIDLIYNDGSKTVIYSTTDQKSLEIYSGGDIGSLVSDGQVVVQAGLPYATTTGAGGQPVYIVADGALPAGVEEHLQSGKLNGQTTPIDVSGLSQNEIQGFLLGSHPSSSATVSTTGVVSTTTISHHQQQQQQQQQQQQQQQQQHQQQQQHPGDIVSAAGVGSTGSIVSSAAQQQQQQQLISIKREPEDLRKDPKNGNIAGAATANGPGSVITQKILHVDAPTASEADRPSTPSSSINSTENTESDSQSVSGSESGSPGARTTATLEMYATTGGTQIYLQTSHPSTASGAGGGAGPAGAAGGGGVSMQAQSPSPGPYITANDYGMYTASRLPPGPPPTSTTTFIAEPSYYREYFAPDGQGGYVPASTRSLYGDVDVSVSQPGGVVTYEGRFAGSVPPPATTTVLTSVHHHQQQQQQQQQHQQQQQQQQHHQQQQHHSQDGKSNGGATPLYAKAITAAGLTVDLPSPDSGIGTDAITPRDQTNIQQSFDYTELCQPGTLIDANGSIPVSVNSIQQRTAVHGSQNSPTTSLVDTSTNGSTRSRPWHDFGRQNDADKIQIPKIFTNVGFRYHLESPISSSQRREDDRITYINKGQFYGITLEYVHDAEKPIKNTTVKSVIMLMFREEKSPEDEIKAWQFWHSRQHSVKQRILDADTKNSVGLVGCIEEVSHNAIAVYWNPLESSAKINIAVQCLSTDFSSQKGVKGLPLHVQIDTFEDPRDTAVFHRGYCQIKVFCDKGAERKTRDEERRAAKRKMTATGRKKLDELYHPVTDRSEFYGMQDFAKPPVLFSPAEDMEKVGQLGIGAATGMTFNPLSNGNSNSNSHSSLQSFYGHETDSPDLKGASPFLLHGQKVATPTLKFHNHFPPDMQTDKKDHILDQNMLTSTPLTDFGPPMKRGRMTPPTSERVMLYVRQENEEVYTPLHVVPPTTIGLLNAIENKYKISTTSINNIYRTNKKGITAKIDDDMISFYCNEDIFLLEVQQIEDDLYDVTLTELPNQ.

5 disordered regions span residues 52-93 (SLSP…DSPQ), 439-598 (LLGS…PGAR), 617-655 (QTSH…GPYI), 727-784 (RFAG…GGAT), and 853-885 (TAVH…DFGR). Residues 59 to 68 (GSGGHSGGGN) show a composition bias toward gly residues. Residues 445 to 488 (SSSATVSTTGVVSTTTISHHQQQQQQQQQQQQQQQQQHQQQQQH) show a composition bias toward low complexity. The span at 520-532 (IKREPEDLRKDPK) shows a compositional bias: basic and acidic residues. Low complexity-rich tracts occupy residues 533–546 (NGNI…NGPG) and 567–596 (PSTP…GSPG). A compositionally biased stretch (gly residues) spans 626 to 642 (GAGGGAGPAGAAGGGGV). Over residues 749 to 772 (QQQQQQQQHQQQQQQQQHHQQQQH) the composition is skewed to low complexity. Polar residues predominate over residues 853–877 (TAVHGSQNSPTTSLVDTSTNGSTRS). One can recognise a Grh/CP2 DB domain in the interval 899 to 1125 (TNVGFRYHLE…DFAKPPVLFS (227 aa)).

The protein belongs to the grh/CP2 family. Grainyhead subfamily. Restricted, during embryogenesis, to tissues derived from ectoderm, predominantly the central nervous system (CNS) and the epidermis.

The protein localises to the nucleus. Transcription factor that binds a CNS-specific regulatory element of the Dopa decarboxylase (Ddc) gene. Also interacts with sequences adjacent to other transcription units, including Ultrabithorax (Ubx) and engrailed (en). Activity in vivo may be required only at high levels transiently to activate the expression of Ddc in the CNS. The polypeptide is Protein grainyhead (grh) (Drosophila melanogaster (Fruit fly)).